The sequence spans 715 residues: Polyribonucleotide nucleotidyltransferase (715 aa).

Mg(2+) contacts are provided by aspartate 493 and aspartate 499. The KH domain maps to 560–619 (PRMITIKINPEKIRDVIGKGGSVIRALTEETGTTIDISDDGVVTIASTNSDGMAEAKKRI). An S1 motif domain is found at 629 to 697 (GQVYEGTVLK…EKGRVRLSAK (69 aa)).

It belongs to the polyribonucleotide nucleotidyltransferase family. Mg(2+) serves as cofactor.

Its subcellular location is the cytoplasm. It catalyses the reaction RNA(n+1) + phosphate = RNA(n) + a ribonucleoside 5'-diphosphate. Involved in mRNA degradation. Catalyzes the phosphorolysis of single-stranded polyribonucleotides processively in the 3'- to 5'-direction. The sequence is that of Polyribonucleotide nucleotidyltransferase from Burkholderia lata (strain ATCC 17760 / DSM 23089 / LMG 22485 / NCIMB 9086 / R18194 / 383).